The chain runs to 192 residues: Casparian strip membrane protein 4 (192 aa).

At 1 to 29 the chain is on the cytoplasmic side; that stretch reads MTKDVVIEHGESSKAPLVPAPVAAGVGRA. A helical membrane pass occupies residues 30–50; that stretch reads VSIADVFLRFLSIVATIASAI. At 51–79 the chain is on the extracellular side; that stretch reads SMGTTNETLPFFTQFIQFEAKYSDLPSFT. The N-linked (GlcNAc...) asparagine glycan is linked to asparagine 56. A helical membrane pass occupies residues 80 to 100; that stretch reads FFVAANAVVCTYLVLSIPLSI. Residues 101 to 112 are Cytoplasmic-facing; sequence VHIIRPRARYSR. Residues 113–133 traverse the membrane as a helical segment; sequence LILVFFDAVMLALLTAGASAA. At 134–166 the chain is on the extracellular side; that stretch reads AAIVYLAHKGNVRANWFAICQQFDSFCERISGS. Residues 167-187 traverse the membrane as a helical segment; that stretch reads LIGSFAAMVLLIVLIFLSAFA. The Cytoplasmic segment spans residues 188-192; that stretch reads LARRH.

Belongs to the Casparian strip membrane proteins (CASP) family. In terms of assembly, homodimer and heterodimers.

It localises to the cell membrane. Regulates membrane-cell wall junctions and localized cell wall deposition. Required for establishment of the Casparian strip membrane domain (CSD) and the subsequent formation of Casparian strips, a cell wall modification of the root endodermis that determines an apoplastic barrier between the intraorganismal apoplasm and the extraorganismal apoplasm and prevents lateral diffusion. The polypeptide is Casparian strip membrane protein 4 (Sorghum bicolor (Sorghum)).